A 184-amino-acid polypeptide reads, in one-letter code: Peptidyl-tRNA hydrolase (184 aa).

Position 14 (Tyr-14) interacts with tRNA. Residue His-19 is the Proton acceptor of the active site. TRNA is bound by residues Phe-64, Asn-66, and Asn-112.

The protein belongs to the PTH family. Monomer.

The protein resides in the cytoplasm. The catalysed reaction is an N-acyl-L-alpha-aminoacyl-tRNA + H2O = an N-acyl-L-amino acid + a tRNA + H(+). In terms of biological role, hydrolyzes ribosome-free peptidyl-tRNAs (with 1 or more amino acids incorporated), which drop off the ribosome during protein synthesis, or as a result of ribosome stalling. Its function is as follows. Catalyzes the release of premature peptidyl moieties from peptidyl-tRNA molecules trapped in stalled 50S ribosomal subunits, and thus maintains levels of free tRNAs and 50S ribosomes. The chain is Peptidyl-tRNA hydrolase from Thermoanaerobacter sp. (strain X514).